Here is a 148-residue protein sequence, read N- to C-terminus: Glutamyl-tRNA(Gln) amidotransferase subunit C, mitochondrial (148 aa).

The protein belongs to the GatC family. As to quaternary structure, subunit of the heterotrimeric GatCAB amidotransferase (AdT) complex, composed of A, B and C subunits.

Its subcellular location is the mitochondrion. It catalyses the reaction L-glutamyl-tRNA(Gln) + L-glutamine + ATP + H2O = L-glutaminyl-tRNA(Gln) + L-glutamate + ADP + phosphate + H(+). Its function is as follows. Allows the formation of correctly charged Gln-tRNA(Gln) through the transamidation of misacylated Glu-tRNA(Gln) in the mitochondria. The reaction takes place in the presence of glutamine and ATP through an activated gamma-phospho-Glu-tRNA(Gln). This Drosophila melanogaster (Fruit fly) protein is Glutamyl-tRNA(Gln) amidotransferase subunit C, mitochondrial.